A 42-amino-acid chain; its full sequence is Photosystem II reaction center protein J (42 aa).

Residues 10 to 30 form a helical membrane-spanning segment; the sequence is IPLWLVGTVVGIAALTLLSVF.

Belongs to the PsbJ family. In terms of assembly, PSII is composed of 1 copy each of membrane proteins PsbA, PsbB, PsbC, PsbD, PsbE, PsbF, PsbH, PsbI, PsbJ, PsbK, PsbL, PsbM, PsbT, PsbX, PsbY, PsbZ, Psb30/Ycf12, at least 3 peripheral proteins of the oxygen-evolving complex and a large number of cofactors. It forms dimeric complexes.

It localises to the plastid. It is found in the chloroplast thylakoid membrane. One of the components of the core complex of photosystem II (PSII). PSII is a light-driven water:plastoquinone oxidoreductase that uses light energy to abstract electrons from H(2)O, generating O(2) and a proton gradient subsequently used for ATP formation. It consists of a core antenna complex that captures photons, and an electron transfer chain that converts photonic excitation into a charge separation. This chain is Photosystem II reaction center protein J, found in Tupiella akineta (Green alga).